We begin with the raw amino-acid sequence, 210 residues long: Small ribosomal subunit protein bS6 (210 aa).

Residues proline 99–glycine 210 form a disordered region. The segment covering asparagine 120 to glycine 210 has biased composition (basic and acidic residues).

It belongs to the bacterial ribosomal protein bS6 family.

Functionally, binds together with bS18 to 16S ribosomal RNA. The protein is Small ribosomal subunit protein bS6 of Prochlorococcus marinus (strain SARG / CCMP1375 / SS120).